The sequence spans 705 residues: Tetratricopeptide repeat protein 12 (705 aa).

Threonine 71 carries the post-translational modification Phosphothreonine. TPR repeat units follow at residues 106–139 (ADAL…LKDM), 140–173 (KVLY…DEKC), and 174–207 (TKAY…NPKL).

Expressed in testis and in epithelial cells of trachea and bronchial tube.

The protein resides in the cytoplasm. In terms of biological role, cytoplasmic protein that plays a role in the proper assembly of dynein arm complexes in motile cilia in both respiratory cells and sperm flagella. This is Tetratricopeptide repeat protein 12 (TTC12) from Homo sapiens (Human).